Reading from the N-terminus, the 507-residue chain is Sulfatase (507 aa).

Positions 1–18 (MKTRYFLLLGICMLSCRT) are cleaved as a signal peptide. Ca(2+)-binding residues include Asp-39, Asp-40, and Cys-79. The active-site Nucleophile is Cys-79. Cys-79 is modified (3-oxoalanine (Cys)). His-139 is an active-site residue. Positions 325 and 326 each coordinate Ca(2+).

It belongs to the sulfatase family. It depends on Ca(2+) as a cofactor. The conversion to 3-oxoalanine (also known as C-formylglycine, FGly), of a serine or cysteine residue in prokaryotes and of a cysteine residue in eukaryotes, is critical for catalytic activity. This post-translational modification is severely defective in multiple sulfatase deficiency (MSD).

It is found in the periplasm. Its function is as follows. Sulfatase that may be involved in ulvan degradation. Ulvan is the main polysaccharide component of the Ulvales (green seaweed) cell wall. It is composed of disaccharide building blocks comprising 3-sulfated rhamnose (Rha3S) linked to D-glucuronic acid (GlcA), L-iduronic acid (IduA), or D-xylose (Xyl). Has no activity on different ulvan polymers. The sequence is that of Sulfatase from Formosa agariphila (strain DSM 15362 / KCTC 12365 / LMG 23005 / KMM 3901 / M-2Alg 35-1).